A 182-amino-acid chain; its full sequence is Early nodulin-like protein 14 (182 aa).

The first 28 residues, 1-28 (MFLSASMASSSLHVAIFSLIFLFSLAAA), serve as a signal peptide directing secretion. The Phytocyanin domain occupies 29–133 (NEVTVGGKSG…GQKLSLVVIS (105 aa)). An intrachain disulfide couples Cys87 to Cys121. N-linked (GlcNAc...) asparagine glycans are attached at residues Asn88 and Asn95. Ser160 carries the GPI-anchor amidated serine lipid modification. Positions 161 to 182 (GSVRLGGCYVVLGLVLGLCAWF) are cleaved as a propeptide — removed in mature form.

The protein belongs to the early nodulin-like (ENODL) family. In terms of assembly, interacts strongly and specifically with the extracellular domain of FERONIA at the synergid cell surface. In terms of tissue distribution, mostly expressed in seedlings and flowers, and, to a lower extent, in roots, stems and seeds, but barely in leaves.

The protein resides in the cell membrane. Functionally, may act as a carbohydrate transporter. Required, together with ENODL11, ENODL12, ENODL13, ENODL14 and ENODL15, for male-female communication and pollen tube reception and burst at the synergid cell surface of the female gametophyte. The polypeptide is Early nodulin-like protein 14 (Arabidopsis thaliana (Mouse-ear cress)).